The following is a 363-amino-acid chain: Protein-glutamate methylesterase/protein-glutamine glutaminase of group 3 operon (363 aa).

A Response regulatory domain is found at 7 to 124; that stretch reads RVLIVDDSAS…RQALLECSTR (118 aa). A 4-aspartylphosphate modification is found at Asp58. Residues 166–357 enclose the CheB-type methylesterase domain; it reads PTTERIVCIG…REIMLWYQAG (192 aa). Catalysis depends on residues Ser177, His203, and Asp299.

Belongs to the CheB family. Phosphorylated by CheA. Phosphorylation of the N-terminal regulatory domain activates the methylesterase activity.

The protein localises to the cytoplasm. The enzyme catalyses [protein]-L-glutamate 5-O-methyl ester + H2O = L-glutamyl-[protein] + methanol + H(+). It carries out the reaction L-glutaminyl-[protein] + H2O = L-glutamyl-[protein] + NH4(+). In terms of biological role, involved in chemotaxis. Part of a chemotaxis signal transduction system that modulates chemotaxis in response to various stimuli. Catalyzes the demethylation of specific methylglutamate residues introduced into the chemoreceptors (methyl-accepting chemotaxis proteins or MCP) by CheR. Also mediates the irreversible deamidation of specific glutamine residues to glutamic acid. In Bradyrhizobium diazoefficiens (strain JCM 10833 / BCRC 13528 / IAM 13628 / NBRC 14792 / USDA 110), this protein is Protein-glutamate methylesterase/protein-glutamine glutaminase of group 3 operon.